The sequence spans 361 residues: UDP-N-acetylglucosamine--N-acetylmuramyl-(pentapeptide) pyrophosphoryl-undecaprenol N-acetylglucosamine transferase (361 aa).

Residues Ser-199 and Gln-290 each contribute to the UDP-N-acetyl-alpha-D-glucosamine site.

This sequence belongs to the glycosyltransferase 28 family. MurG subfamily.

The protein localises to the cell membrane. It carries out the reaction Mur2Ac(oyl-L-Ala-gamma-D-Glu-L-Lys-D-Ala-D-Ala)-di-trans,octa-cis-undecaprenyl diphosphate + UDP-N-acetyl-alpha-D-glucosamine = beta-D-GlcNAc-(1-&gt;4)-Mur2Ac(oyl-L-Ala-gamma-D-Glu-L-Lys-D-Ala-D-Ala)-di-trans,octa-cis-undecaprenyl diphosphate + UDP + H(+). It participates in cell wall biogenesis; peptidoglycan biosynthesis. Its function is as follows. Cell wall formation. Catalyzes the transfer of a GlcNAc subunit on undecaprenyl-pyrophosphoryl-MurNAc-pentapeptide (lipid intermediate I) to form undecaprenyl-pyrophosphoryl-MurNAc-(pentapeptide)GlcNAc (lipid intermediate II). The chain is UDP-N-acetylglucosamine--N-acetylmuramyl-(pentapeptide) pyrophosphoryl-undecaprenol N-acetylglucosamine transferase from Streptococcus mutans serotype c (strain ATCC 700610 / UA159).